A 732-amino-acid chain; its full sequence is Coagulation factor XIII A chain (732 aa).

The segment at 1 to 26 (MSDTPASTFGGRRAVPPNNSNAAEVD) is disordered. Ser2 is modified (N-acetylserine). A propeptide spans 2 to 38 (SDTPASTFGGRRAVPPNNSNAAEVDLPTEELQGLVPR) (activation peptide). Catalysis depends on residues Cys315, His374, and Asp397. Ca(2+) contacts are provided by Asn437, Asp439, Glu486, and Glu491. N-linked (GlcNAc...) asparagine glycosylation occurs at Asn614.

The protein belongs to the transglutaminase superfamily. Transglutaminase family. As to quaternary structure, tetramer of two A chains (F13A1) and two B (F13B) chains. Ca(2+) is required as a cofactor. In terms of processing, the activation peptide is released by thrombin.

The protein localises to the cytoplasm. It is found in the secreted. It catalyses the reaction L-glutaminyl-[protein] + L-lysyl-[protein] = [protein]-L-lysyl-N(6)-5-L-glutamyl-[protein] + NH4(+). Its function is as follows. Factor XIII is activated by thrombin and calcium ion to a transglutaminase that catalyzes the formation of gamma-glutamyl-epsilon-lysine cross-links between fibrin chains, thus stabilizing the fibrin clot. Also cross-link alpha-2-plasmin inhibitor, or fibronectin, to the alpha chains of fibrin. In Mus musculus (Mouse), this protein is Coagulation factor XIII A chain (F13a1).